Consider the following 774-residue polypeptide: Mastermind-like domain-containing protein 1 (774 aa).

Disordered stretches follow at residues 257–279, 310–365, 386–421, 442–473, 525–609, 656–678, and 755–774; these read STGI…SSMA, LAAS…PQSL, ALLS…QPQF, HLMS…QQSF, GMAS…QPDH, PQHQ…VSPS, and LPSC…GNDP. Positions 331–361 are enriched in pro residues; that stretch reads LPPPGLSPPYRPVPSPHPPPLPLPPPPPPFS. Over residues 386 to 397 the composition is skewed to polar residues; that stretch reads ALLSSMTSSSNA. Residues 574–609 show a composition bias toward low complexity; that stretch reads QQPTPTQASSATASSTATATLQLQQQQQQQQQQPDH. Residues 656–669 show a composition bias toward polar residues; the sequence is PQHQHGNSFTSRQD. Phosphoserine is present on Ser676.

This sequence belongs to the mastermind family. In terms of tissue distribution, expressed in fetal brain, fetal ovary and fetal testis. Expressed in adult brain, ovary, skin, testis, uterus. Highly expressed in skeletal muscle.

Its subcellular location is the nucleus. Its function is as follows. Transactivates the HES3 promoter independently of NOTCH proteins. HES3 is a non-canonical NOTCH target gene which lacks binding sites for RBPJ. The polypeptide is Mastermind-like domain-containing protein 1 (MAMLD1) (Homo sapiens (Human)).